We begin with the raw amino-acid sequence, 201 residues long: Akirin-2 (201 aa).

2 positions are modified to phosphoserine: serine 18 and serine 21. Residues 22 to 27 (PKRRRC) carry the Nuclear localization signal motif. Position 55 is a phosphoserine (serine 55). The SYVS motif motif lies at 198–201 (SYVS).

This sequence belongs to the akirin family. As to quaternary structure, homodimer. Interacts with IPO9; the interaction is direct. Associates with 20S and 26S proteasomes. Interacts with SMARCD1; promoting SWI/SNF complex recruitment. Interacts with NFKBIZ. Interacts with YWHAB. Post-translationally, polyubiquitinated. Polyubiquitination is dependent of UBR5 that extends pre-ubiquitinated AKIRIN2. Highly expressed in testis, cerebrum and cerebellum, and barely detectable in liver, heart, spleen and muscle. Also highly expressed in various tumor cells from hepatoma, glioblastoma and pheochromocytoma.

The protein localises to the nucleus. It localises to the cytoplasm. Its subcellular location is the membrane. Molecular adapter that acts as a bridge between a variety of multiprotein complexes, and which is involved in embryonic development, immunity, myogenesis and brain development. Plays a key role in nuclear protein degradation by promoting import of proteasomes into the nucleus: directly binds to fully assembled 20S proteasomes at one end and to nuclear import receptor IPO9 at the other end, bridging them together and mediating the import of pre-assembled proteasome complexes through the nuclear pore. Involved in innate immunity by regulating the production of interleukin-6 (IL6) downstream of Toll-like receptor (TLR): acts by bridging the NF-kappa-B inhibitor NFKBIZ and the SWI/SNF complex, leading to promote induction of IL6. Also involved in adaptive immunity by promoting B-cell activation. Involved in brain development: required for the survival and proliferation of cerebral cortical progenitor cells. Involved in myogenesis: required for skeletal muscle formation and skeletal development, possibly by regulating expression of muscle differentiation factors. Also plays a role in facilitating interdigital tissue regression during limb development. This is Akirin-2 from Rattus norvegicus (Rat).